The chain runs to 449 residues: MVFCLENEMPHRLLGSAMVHFHASEVQQLLHNKFVVILGDSIQRAVYKDLVLLLQKDTLLTASQLKAKGELSFEQDQLVAGGQLGELHNGTQYREVRQFCSGSGHHLVRFYFLTRVYSEYLEDILEELSYGPAPDLVIINSCLWDLSRYGRCSMESYRENLERVFVRMDQVLPDSCLLVWNLAMPLGERVTGGFLLPELQPLAVSLRQDVVEGNFYSATLAGKHCFDVLDLHFHFRHAVRHRHRDGVHWDQHAHRHLSHLLLAHVADAWGVELPKHDRLPDPWIEDWSEMDHSFQGSHKQPPDFREKLALPLLPPFHLPPPMSFPYPLEPSPPPLFPPLPQDTPFFQGQPFPPYEFKYNAMEDFSMPGCGPGMNFVPGPLPPSVSGPVSHGQHRGPVVHRGKPRCVLNNPYHVPRIGGPCRHRLRHSDRLIHTYKQDRRGHAHSGTWPG.

It belongs to the PC-esterase family.

In Mus musculus (Mouse), this protein is PC-esterase domain-containing protein 1A (Pced1a).